The following is a 196-amino-acid chain: dITP/XTP pyrophosphatase (196 aa).

A substrate-binding site is contributed by 10-15; it reads SGNKGK. Residues Glu40 and Asp69 each contribute to the Mg(2+) site. Asp69 serves as the catalytic Proton acceptor. Residues Ser70, 147–150, Lys170, and 175–176 contribute to the substrate site; these read FGYD and HR.

This sequence belongs to the HAM1 NTPase family. Homodimer. Mg(2+) is required as a cofactor.

It carries out the reaction XTP + H2O = XMP + diphosphate + H(+). The enzyme catalyses dITP + H2O = dIMP + diphosphate + H(+). It catalyses the reaction ITP + H2O = IMP + diphosphate + H(+). Pyrophosphatase that catalyzes the hydrolysis of nucleoside triphosphates to their monophosphate derivatives, with a high preference for the non-canonical purine nucleotides XTP (xanthosine triphosphate), dITP (deoxyinosine triphosphate) and ITP. Seems to function as a house-cleaning enzyme that removes non-canonical purine nucleotides from the nucleotide pool, thus preventing their incorporation into DNA/RNA and avoiding chromosomal lesions. This is dITP/XTP pyrophosphatase from Prochlorococcus marinus (strain NATL1A).